A 1026-amino-acid chain; its full sequence is MQHNVHAARPAPHIRAAHHHSHSHAHMHLHPGMEQHLGPSLQQQQQPPPPPQQPPHRDLHARLNHHHLHAQQQQQQQTSSNQAGAVAAAGAAYHHGNINSNSGSNISSNSNQMQKIRQQHQHLSSSNGLLGNQPPGPPPQAFNPLAGNPAALAYNQLPPHPPHHMAAHLGSYAAPPPHYYMSQAKPAKYNHYGSNANSNSGSNNSNSNYAPKAILQNTYRNQKVVVPPVVQEVTPVPEPPVTTNNATTNSTSNSTVIASEPVTQEDTSQKPETRQEPASADDHVSTGNIDATGALSNEDTSSSGRGGKDKTPMCLVNELARYNKITHQYRLTEERGPAHCKTFTVTLMLGDEEYSADGFKIKKAQHLAASKAIEETMYKHPPPKIRRSEEGGPMRTHITPTVELNALAMKLGQRTFYLLDPTQIPPTDSIVPPEFAGGHLLTAPGPGMPQPPPPPAYALRQRLGNGFVPIPSQPMHPHFFHGPGQRPFPPKFPSRFALPPPLGAHVHHGPNGPFPSVPTPPSKITLFVGKQKFVGIGRTLQQAKHDAAARALQVLKTQAISASEEALEDSMDEGDKKSPISQVHEIGIKRNMTVHFKVLREEGPAHMKNFITACIVGSIVTEGEGNGKKVSKKRAAEKMLVELQKLPPLTPTKQTPLKRIKVKTPGKSGAAAREGSVVSGTDGPTQTGKPERRKRLNPPKDKLIDMDDADNPITKLIQLQQTRKEKEPIFELIAKNGNETARRREFVMEVSASGSTARGTGNSKKLAKRNAAQALFELLEAVQVTPTNETQSSEECSTSATMSAVTAPAVEATAEGKVPMVATPVGPMPGILILRQNKKPAKKRDQIVIVKSNVESKEEEANKEVAVAAEENSNNSANSGDSSNSSSGDSQATEAASESALNTSTGSNTSGVSSNSSNVGANTDGNNHAESKNNTESSSNSTSNTQSAGVHMKEQLLYLSKLLDFEVNFSDYPKGNHNEFLTIVTLSTHPPQICHGVGKSSEESQNDAASNALKILSKLGLNNAMK.

The segment covering 16–29 (AAHHHSHSHAHMHL) has biased composition (basic residues). Disordered regions lie at residues 16 to 159 (AAHH…QLPP), 190 to 210 (NHYGSNANSNSGSNNSNSNYA), and 234 to 311 (TPVP…KDKT). Low complexity predominate over residues 70–111 (AQQQQQQQTSSNQAGAVAAAGAAYHHGNINSNSGSNISSNSN). The span at 112-126 (QMQKIRQQHQHLSSS) shows a compositional bias: polar residues. 2 stretches are compositionally biased toward low complexity: residues 192 to 210 (YGSNANSNSGSNNSNSNYA) and 234 to 256 (TPVPEPPVTTNNATTNSTSNSTV). Over residues 267-284 (TSQKPETRQEPASADDHV) the composition is skewed to basic and acidic residues. Polar residues predominate over residues 285 to 303 (STGNIDATGALSNEDTSSS). DRBM domains are found at residues 311–378 (TPMC…ETMY) and 490–557 (PKFP…VLKT). Residues Ser563 and Ser570 each carry the phosphoserine modification. Residues 578 to 645 (SPISQVHEIG…AEKMLVELQK (68 aa)) form the DRBM 3 domain. 5 residues coordinate RNA: His606, Lys608, Lys628, Lys629, and Lys632. Residues 647–707 (PPLTPTKQTP…PPKDKLIDMD (61 aa)) are disordered. Phosphothreonine is present on residues Thr650 and Thr655. A Phosphoserine modification is found at Ser676. Positions 678-688 (VSGTDGPTQTG) are enriched in polar residues. A DRBM 4 domain is found at 711 to 781 (NPITKLIQLQ…AQALFELLEA (71 aa)). The tract at residues 855 to 948 (ESKEEEANKE…SNSTSNTQSA (94 aa)) is disordered. A compositionally biased stretch (low complexity) spans 864 to 890 (EVAVAAEENSNNSANSGDSSNSSSGDS). Polar residues predominate over residues 891-901 (QATEAASESAL). Low complexity-rich tracts occupy residues 902 to 920 (NTSTGSNTSGVSSNSSNVG) and 934 to 947 (NTESSSNSTSNTQS). The DRBM 5 domain occupies 951-1018 (HMKEQLLYLS…ASNALKILSK (68 aa)).

In terms of assembly, component of neuronal ribonucleoprotein complexes (RNPs) that contains at least various translational repressor and mRNA turnover proteins such as me31B, tral, Upf1, AGO2 and sometimes Fmr1. As to expression, polar granules at the posterior pole of the oocyte, and by the time the egg is laid, at the anterior pole.

The protein resides in the cytoplasm. Its subcellular location is the cytoplasmic ribonucleoprotein granule. Functionally, RNA-binding protein which forms ribonucleoprotein complexes (RNPs) that play critical roles in the localization, translational repression and turnover of RNAs during embryogenesis, neurotransmission and neurogenesis. In the oocyte, essential for the localization of both the osk/oskar mRNA to the posterior pole and bcd/bicoid RNA to the anterior pole, and is therefore required for the correct anterior-posterior patterning of the developing embryo. Association with osk or bcd at their respective poles, appears to promote the formation and stabilization of the ribonucleoprotein complexes. Integral component of diverse neuritic ribonucleoprotein complexes (RNPs) that mediate the transport, translation and turnover of neuronal RNAs during neuorgenesis and the translation repression of synaptic transcripts in preparation for their dendritic targeting. In Drosophila melanogaster (Fruit fly), this protein is Maternal effect protein staufen (stau).